The chain runs to 612 residues: Elongation factor 4 (612 aa).

A tr-type G domain is found at 11-193; sequence KHIRNFSIVA…EIVKKVPAPD (183 aa). GTP contacts are provided by residues 23–28 and 140–143; these read DHGKST and NKID.

The protein belongs to the TRAFAC class translation factor GTPase superfamily. Classic translation factor GTPase family. LepA subfamily.

The protein resides in the cell membrane. It carries out the reaction GTP + H2O = GDP + phosphate + H(+). In terms of biological role, required for accurate and efficient protein synthesis under certain stress conditions. May act as a fidelity factor of the translation reaction, by catalyzing a one-codon backward translocation of tRNAs on improperly translocated ribosomes. Back-translocation proceeds from a post-translocation (POST) complex to a pre-translocation (PRE) complex, thus giving elongation factor G a second chance to translocate the tRNAs correctly. Binds to ribosomes in a GTP-dependent manner. In Lactobacillus johnsonii (strain CNCM I-12250 / La1 / NCC 533), this protein is Elongation factor 4.